The sequence spans 610 residues: Elongation factor 4 (610 aa).

The tr-type G domain maps to 7–189; the sequence is SRIRNFSIIA…AIVQRIPPPK (183 aa). GTP-binding positions include 19–24 and 136–139; these read DHGKST and NKID.

Belongs to the TRAFAC class translation factor GTPase superfamily. Classic translation factor GTPase family. LepA subfamily.

The protein resides in the cell inner membrane. It catalyses the reaction GTP + H2O = GDP + phosphate + H(+). Functionally, required for accurate and efficient protein synthesis under certain stress conditions. May act as a fidelity factor of the translation reaction, by catalyzing a one-codon backward translocation of tRNAs on improperly translocated ribosomes. Back-translocation proceeds from a post-translocation (POST) complex to a pre-translocation (PRE) complex, thus giving elongation factor G a second chance to translocate the tRNAs correctly. Binds to ribosomes in a GTP-dependent manner. The sequence is that of Elongation factor 4 from Thermus thermophilus (strain ATCC 27634 / DSM 579 / HB8).